A 353-amino-acid polypeptide reads, in one-letter code: Elongation factor Ts (353 aa).

The tract at residues 80-83 (TDFV) is involved in Mg(2+) ion dislocation from EF-Tu.

It belongs to the EF-Ts family.

It is found in the cytoplasm. Functionally, associates with the EF-Tu.GDP complex and induces the exchange of GDP to GTP. It remains bound to the aminoacyl-tRNA.EF-Tu.GTP complex up to the GTP hydrolysis stage on the ribosome. In Sulfurovum sp. (strain NBC37-1), this protein is Elongation factor Ts.